Here is a 574-residue protein sequence, read N- to C-terminus: MKDMSNKKIFKKYSRVAGLLTAALIVGNLVTANADSNKQNTANTETTTTNEQPKPESSELTTEKAGQKMDDMLNSNDMIKLAPKEMPLESAEKEEKKSEDNKKSEEDHTEEINDKIYSLNYNELEVLAKNGETIENFVPKEGVKKADKFIVIERKKKNINTTPVDISIIDSVTDRTYPAALQLANKGFTENKPDAVVTKRNPQKIHIDLPGMGDKATVEVNDPTYANVSTAIDNLVNQWHDNYSGGNTLPARTQYTESMVYSKSQIEAALNVNSKILDGTLGIDFKSISKGEKKVMIAAYKQIFYTVSANLPNNPADVFDKSVTLKELQRKGVSNEAPPLFVSNVAYGRTVFVKLETSSKSNDVEAAFSAALKGTDVKTNGKYSDILENSSFTAVVLGGDAAEHNKVVTKDFDVIRNVIKDNATFSRKNPAYPISYTSVFLKNNKIAGVNNRSEYVETTSTEYTSGKINLSHQGAYVAQYEILWDEINYDDKGKEVITKRRWDNNWYSKTSPFSTVIPLGANSRNIRIMARECTGLAWEWWRKVIDERDVKLSKEINVNISGSTLSPYGSITYK.

The first 36 residues, 1–36 (MKDMSNKKIFKKYSRVAGLLTAALIVGNLVTANADS), serve as a signal peptide directing secretion. A compositionally biased stretch (low complexity) spans 37 to 52 (NKQNTANTETTTTNEQ). Disordered regions lie at residues 37 to 64 (NKQN…TTEK) and 84 to 111 (KEMP…HTEE). Positions 53–64 (PKPESSELTTEK) are enriched in basic and acidic residues. 4 beta stranded membrane-spanning segments follow: residues 263 to 276 (KSQI…NSKI), 283 to 292 (IDFKSISKGE), 361 to 370 (SNDVEAAFSA), and 378 to 390 (KTNG…LENS). The Conserved undecapeptide signature appears at 532-542 (ECTGLAWEWWR). The Cholesterol binding motif lies at 564–565 (TL).

The protein belongs to the cholesterol-dependent cytolysin family. In terms of assembly, homooligomeric pore complex of 35 to 50 subunits; when inserted in the host membrane.

It localises to the secreted. It is found in the host cell membrane. A cholesterol-dependent toxin that causes cytolysis by forming pores in cholesterol containing host membranes. After binding to target membranes, the protein undergoes a major conformation change, leading to its insertion in the host membrane and formation of an oligomeric pore complex. Cholesterol is required for binding to host membranes, membrane insertion and pore formation; cholesterol binding is mediated by a Thr-Leu pair in the C-terminus. Can be reversibly inactivated by oxidation. The polypeptide is Streptolysin O (slo) (Streptococcus dysgalactiae subsp. equisimilis (Streptococcus equisimilis)).